A 257-amino-acid chain; its full sequence is Phosphate import ATP-binding protein PstB (257 aa).

One can recognise an ABC transporter domain in the interval 4 to 246 (LKLNDVNIYY…KKIFENPDQK (243 aa)). Residue 36 to 43 (GPSGCGKS) participates in ATP binding.

It belongs to the ABC transporter superfamily. Phosphate importer (TC 3.A.1.7) family. The complex is composed of two ATP-binding proteins (PstB), two transmembrane proteins (PstC and PstA) and a solute-binding protein (PstS).

The protein resides in the cell membrane. It catalyses the reaction phosphate(out) + ATP + H2O = ADP + 2 phosphate(in) + H(+). Its function is as follows. Part of the ABC transporter complex PstSACB involved in phosphate import. Responsible for energy coupling to the transport system. In Corynebacterium glutamicum (strain ATCC 13032 / DSM 20300 / JCM 1318 / BCRC 11384 / CCUG 27702 / LMG 3730 / NBRC 12168 / NCIMB 10025 / NRRL B-2784 / 534), this protein is Phosphate import ATP-binding protein PstB.